The sequence spans 66 residues: ATP synthase F(0) complex subunit 8 (66 aa).

A helical membrane pass occupies residues 8–24 (IWLLAVVIVLTTLMIFL). An N6-acetyllysine; alternate modification is found at lysine 54. Residue lysine 54 is modified to N6-succinyllysine; alternate. Position 57 is an N6-acetyllysine (lysine 57).

It belongs to the ATPase protein 8 family. Component of the ATP synthase complex composed at least of ATP5F1A/subunit alpha, ATP5F1B/subunit beta, ATP5MC1/subunit c (homooctomer), MT-ATP6/subunit a, MT-ATP8/subunit 8, ATP5ME/subunit e, ATP5MF/subunit f, ATP5MG/subunit g, ATP5MK/subunit k, ATP5MJ/subunit j, ATP5F1C/subunit gamma, ATP5F1D/subunit delta, ATP5F1E/subunit epsilon, ATP5PF/subunit F6, ATP5PB/subunit b, ATP5PD/subunit d, ATP5PO/subunit OSCP. ATP synthase complex consists of a soluble F(1) head domain (subunits alpha(3) and beta(3)) - the catalytic core - and a membrane F(0) domain - the membrane proton channel (subunits c, a, 8, e, f, g, k and j). These two domains are linked by a central stalk (subunits gamma, delta, and epsilon) rotating inside the F1 region and a stationary peripheral stalk (subunits F6, b, d, and OSCP). Interacts with PRICKLE3.

The protein localises to the mitochondrion membrane. Functionally, subunit 8, of the mitochondrial membrane ATP synthase complex (F(1)F(0) ATP synthase or Complex V) that produces ATP from ADP in the presence of a proton gradient across the membrane which is generated by electron transport complexes of the respiratory chain. ATP synthase complex consist of a soluble F(1) head domain - the catalytic core - and a membrane F(1) domain - the membrane proton channel. These two domains are linked by a central stalk rotating inside the F(1) region and a stationary peripheral stalk. During catalysis, ATP synthesis in the catalytic domain of F(1) is coupled via a rotary mechanism of the central stalk subunits to proton translocation. In vivo, can only synthesize ATP although its ATP hydrolase activity can be activated artificially in vitro. Part of the complex F(0) domain. The polypeptide is ATP synthase F(0) complex subunit 8 (Loxodonta africana (African elephant)).